Reading from the N-terminus, the 193-residue chain is Adenine phosphoribosyltransferase (193 aa).

It belongs to the purine/pyrimidine phosphoribosyltransferase family. Homodimer.

Its subcellular location is the cytoplasm. It catalyses the reaction AMP + diphosphate = 5-phospho-alpha-D-ribose 1-diphosphate + adenine. Its pathway is purine metabolism; AMP biosynthesis via salvage pathway; AMP from adenine: step 1/1. Functionally, catalyzes a salvage reaction resulting in the formation of AMP, that is energically less costly than de novo synthesis. This is Adenine phosphoribosyltransferase from Bifidobacterium adolescentis (strain ATCC 15703 / DSM 20083 / NCTC 11814 / E194a).